A 787-amino-acid polypeptide reads, in one-letter code: ATP-dependent zinc metalloprotease FtsH (787 aa).

The Cytoplasmic portion of the chain corresponds to 1 to 5 (MNRKN). Residues 6–26 (VIRMVTAIAVVVLLGWSFFYF) form a helical membrane-spanning segment. Residues 27–110 (SDDTRGYKFV…KVTTAVNEGS (84 aa)) are Extracellular-facing. Residues 111–131 (ILGELLVYVLPLLLLVGLFVM) form a helical membrane-spanning segment. The Cytoplasmic segment spans residues 132-787 (FSRMQGGARM…VSPSNPPAHG (656 aa)). Residue 203–210 (GPPGTGKT) participates in ATP binding. His-425 provides a ligand contact to Zn(2+). The active site involves Glu-426. Residues His-429 and Asp-501 each coordinate Zn(2+). A disordered region spans residues 616 to 787 (DFGGRIPSDK…VSPSNPPAHG (172 aa)). Composition is skewed to low complexity over residues 650-671 (AFKA…AAQS) and 700-709 (YGAPPGWHAP). Positions 710-720 (GWPPQQPPDYW) are enriched in pro residues. The span at 721–732 (YPPEQQPSQSPY) shows a compositional bias: low complexity. Over residues 733–762 (WPQPAPSYPGQAPPPYPSYPPCPSYPPPGQ) the composition is skewed to pro residues.

The protein in the central section; belongs to the AAA ATPase family. In the C-terminal section; belongs to the peptidase M41 family. In terms of assembly, homohexamer. Zn(2+) is required as a cofactor.

It localises to the cell membrane. Acts as a processive, ATP-dependent zinc metallopeptidase for both cytoplasmic and membrane proteins. Plays a role in the quality control of integral membrane proteins. This is ATP-dependent zinc metalloprotease FtsH from Mycobacterium leprae (strain TN).